The following is a 320-amino-acid chain: Stress-induced-phosphoprotein 1 (320 aa).

6 TPR repeats span residues 5–38 (AIAEKDLGNAAYKQKDFEKAHVHYDKAIELDPSN), 40–72 (TFYNNKAAVYFEEKKFAECVQFCEKAVEVGRET), 80–113 (AKAMSRAGNAFQKQNDLSLAVQWFHRSLSEFRDP), 140–173 (AQEEKNKGNEYFKKGDYPTAMRHYNEAVKRDPEN), 175–207 (ILYSNRAACLTKLMEFQRALDDCDTCIRLDSKF), and 208–241 (IKGYIRKAACLVAMREWSKAQRAYEDALQVDPSN). The tract at residues 241-269 (NEEAREGVRNCLRSNDEDPEKAKERSLAD) is disordered. Positions 242–269 (EEAREGVRNCLRSNDEDPEKAKERSLAD) are enriched in basic and acidic residues. An STI1 domain is found at 269-308 (DPEVQEILRDPGMRMILEQMSNDPGAVREHLKNPEIFQKL).

In terms of assembly, forms a complex with hsp-1/hsp70 and daf-21/hsp90. Interacts with daf-21/hsp90 (via the C-terminal MEEVD pentapeptide). As to expression, expressed ubiquitously in the whole body. Detected predominantly in the pharyngeal muscles, vulva epithelial cells, striated body-wall muscles, spermathecae and intestinal cell ring. Also observed in the tail regions of hermaphrodite and in the sensory rays and spicules of males.

The protein localises to the cytoplasm. In terms of biological role, plays a role in gonad development. Up-regulates longevity and thermotolerance. Binds daf-21/hsp90 and inhibits its ATPase activity. This Caenorhabditis elegans protein is Stress-induced-phosphoprotein 1.